We begin with the raw amino-acid sequence, 206 residues long: Large ribosomal subunit protein uL4 (206 aa).

A disordered region spans residues 63–98 (MYRQKGTGRARHSSARAPQFRGGGKAHGPVPHSHAH). Over residues 64–76 (YRQKGTGRARHSS) the composition is skewed to basic residues.

The protein belongs to the universal ribosomal protein uL4 family. Part of the 50S ribosomal subunit.

Its function is as follows. One of the primary rRNA binding proteins, this protein initially binds near the 5'-end of the 23S rRNA. It is important during the early stages of 50S assembly. It makes multiple contacts with different domains of the 23S rRNA in the assembled 50S subunit and ribosome. Forms part of the polypeptide exit tunnel. This Chelativorans sp. (strain BNC1) protein is Large ribosomal subunit protein uL4.